Here is a 430-residue protein sequence, read N- to C-terminus: Lipoyl synthase, mitochondrial (430 aa).

The transit peptide at 1 to 37 directs the protein to the mitochondrion; that stretch reads MAASTGKLRTLFSAHSSLSARPSSALPALRLTILRSY. Positions 40–56 are enriched in low complexity; the sequence is TTPPDSSISNPSNPSTT. Residues 40–64 are disordered; that stretch reads TTPPDSSISNPSNPSTTVKRPPTAF. The [4Fe-4S] cluster site is built by cysteine 141, cysteine 146, cysteine 152, cysteine 172, cysteine 176, cysteine 179, and serine 387. A Radical SAM core domain is found at 155 to 376; it reads GSSKSAATAT…KERALEMGFL (222 aa).

This sequence belongs to the radical SAM superfamily. Lipoyl synthase family. [4Fe-4S] cluster is required as a cofactor.

Its subcellular location is the mitochondrion. It carries out the reaction [[Fe-S] cluster scaffold protein carrying a second [4Fe-4S](2+) cluster] + N(6)-octanoyl-L-lysyl-[protein] + 2 oxidized [2Fe-2S]-[ferredoxin] + 2 S-adenosyl-L-methionine + 4 H(+) = [[Fe-S] cluster scaffold protein] + N(6)-[(R)-dihydrolipoyl]-L-lysyl-[protein] + 4 Fe(3+) + 2 hydrogen sulfide + 2 5'-deoxyadenosine + 2 L-methionine + 2 reduced [2Fe-2S]-[ferredoxin]. Its pathway is protein modification; protein lipoylation via endogenous pathway; protein N(6)-(lipoyl)lysine from octanoyl-[acyl-carrier-protein]: step 2/2. In terms of biological role, catalyzes the radical-mediated insertion of two sulfur atoms into the C-6 and C-8 positions of the octanoyl moiety bound to the lipoyl domains of lipoate-dependent enzymes, thereby converting the octanoylated domains into lipoylated derivatives. The chain is Lipoyl synthase, mitochondrial from Blastomyces gilchristii (strain SLH14081) (Blastomyces dermatitidis).